The sequence spans 273 residues: Phosphate import ATP-binding protein PstB (273 aa).

The region spanning 27–268 (VTVRDLNFYY…PSDRRTQDYI (242 aa)) is the ABC transporter domain. 59-66 (GPSGCGKS) contributes to the ATP binding site.

It belongs to the ABC transporter superfamily. Phosphate importer (TC 3.A.1.7) family. As to quaternary structure, the complex is composed of two ATP-binding proteins (PstB), two transmembrane proteins (PstC and PstA) and a solute-binding protein (PstS).

Its subcellular location is the cell inner membrane. The enzyme catalyses phosphate(out) + ATP + H2O = ADP + 2 phosphate(in) + H(+). Functionally, part of the ABC transporter complex PstSACB involved in phosphate import. Responsible for energy coupling to the transport system. This chain is Phosphate import ATP-binding protein PstB, found in Rhodopseudomonas palustris (strain ATCC BAA-98 / CGA009).